We begin with the raw amino-acid sequence, 547 residues long: Cytochrome P450 monooxygenase fsoD (547 aa).

The chain crosses the membrane as a helical span at residues 3–23 (DITLAAVSIGLFFYVGARAVL). Residue Cys490 coordinates heme.

The protein belongs to the cytochrome P450 family. The cofactor is heme.

The protein localises to the membrane. It carries out the reaction isomotiol + reduced [NADPH--hemoprotein reductase] + O2 = 2alpha-hydroxyisomotiol + oxidized [NADPH--hemoprotein reductase] + H2O + H(+). It functions in the pathway secondary metabolite biosynthesis; terpenoid biosynthesis. Functionally, cytochrome P450 monooxygenase; part of the gene cluster that mediates the biosynthesis of the enfumafungin-type antibiotic, fuscoatroside. Within the pathway, fsoD catalyzes the hydroxylation at position C2 of isomotiol to produce 2-alpha-hydroxy-isomotiol. FsoD may also hydroxylate the intermediates 3-O-(beta-D-glucopyranosyl)-isomotiol and 2-deacetoxy-fuscoatroside at the same position C2. The fuscoatroside biosynthesis is initiated by the cyclization of 2,3(S)-oxidosqualene through FsoA's terpene cyclase (TC) domain, leading to the formation of the fernane skeleton isomotiol, harboring a fernane triterpene skeleton with a C8-C9 double bond. Subsequently, C2-alpha-hydroxylation mediated by fsoD results in the production of 2-alpha-hydroxy-isomotiol, which is further acetylated by fsoF. The glycosyltransferase (GT) domain of FsoA may convert isomotiol, 2-alpha-hydroxy-isomotiol, and the acetylated derivative of 2-alpha-hydroxy-isomotiol into their corresponding glycosides 3-O-(beta-D-glucopyranosyl)-isomotiol, 3-O-(beta-D-glucopyranosyl)-2-alpha-hydroxy-isomotiol, and 3-O-(beta-D-glucopyranosyl)-2-alpha-acetoxy-isomotiol, which then undergo oxidative cleavage under the action of fsoE to form s 2-deacetoxy-fuscoatroside, 2-deacetyl-fuscoatroside, and fuscoatroside, respectively. Although hydroxylation followed by acetylation of 3-O-(beta-D-glucopyranosyl)-isomotiol and 2-deacetoxy-fuscoatroside by fsoD and fsoF could not be ruled out, this process is likely to occur with difficulty due to bulky steric hindrance caused by the presence of a glycan at C3 in these compounds. Interestingly, fsoE can also utilize the aglycones isomotiol and 2-alpha-hydroxy-isomotiol as substrates to generate 19-beta-hydroxy-isomotiol and 2-alpha,19-beta-dihydroxy-isomotiol, respectively. These reactions occur with lower efficiency. Finally, fsoE can further convert 2-alpha,19-beta-dihydroxy-isomotiol into 2-alpha-hydroxy-ismotiol-19-one and 2-alpha-hydroxy-ismotiol-19-one into 2-deacetyl-3-deglucopyranosyl-fuscoatroside. The sequence is that of Cytochrome P450 monooxygenase fsoD from Humicola fuscoatra.